A 470-amino-acid polypeptide reads, in one-letter code: Cysteine--tRNA ligase (470 aa).

Residue Cys28 participates in Zn(2+) binding. The 'HIGH' region motif lies at 30 to 40; the sequence is PTVYNYIHIGN. Zn(2+) contacts are provided by Cys212, His237, and Glu241. A 'KMSKS' region motif is present at residues 271-275; that stretch reads KMSKS. Lys274 contributes to the ATP binding site.

This sequence belongs to the class-I aminoacyl-tRNA synthetase family. In terms of assembly, monomer. The cofactor is Zn(2+).

Its subcellular location is the cytoplasm. The catalysed reaction is tRNA(Cys) + L-cysteine + ATP = L-cysteinyl-tRNA(Cys) + AMP + diphosphate. This Pediococcus pentosaceus (strain ATCC 25745 / CCUG 21536 / LMG 10740 / 183-1w) protein is Cysteine--tRNA ligase.